Consider the following 510-residue polypeptide: NAD(P)H-quinone oxidoreductase subunit 2 B, chloroplastic (510 aa).

The next 13 helical transmembrane spans lie at 24 to 44 (LLLF…GLIL), 57 to 77 (IPWL…ALLF), 99 to 119 (IFQF…VEYI), 124 to 144 (MAIT…MFLC), 150 to 170 (ITIF…SGYT), 183 to 203 (YLLM…WLYG), 227 to 247 (PGIS…LSPA), 295 to 315 (WHLL…LIAI), 323 to 343 (MLAY…IVGD), 347 to 367 (GYAS…GTFA), 395 to 415 (ALSS…AGFF), 418 to 438 (LHLF…IGLL), and 484 to 504 (MIVC…IIAI).

This sequence belongs to the complex I subunit 2 family. NDH is composed of at least 16 different subunits, 5 of which are encoded in the nucleus.

The protein localises to the plastid. Its subcellular location is the chloroplast thylakoid membrane. The enzyme catalyses a plastoquinone + NADH + (n+1) H(+)(in) = a plastoquinol + NAD(+) + n H(+)(out). It catalyses the reaction a plastoquinone + NADPH + (n+1) H(+)(in) = a plastoquinol + NADP(+) + n H(+)(out). Its function is as follows. NDH shuttles electrons from NAD(P)H:plastoquinone, via FMN and iron-sulfur (Fe-S) centers, to quinones in the photosynthetic chain and possibly in a chloroplast respiratory chain. The immediate electron acceptor for the enzyme in this species is believed to be plastoquinone. Couples the redox reaction to proton translocation, and thus conserves the redox energy in a proton gradient. The polypeptide is NAD(P)H-quinone oxidoreductase subunit 2 B, chloroplastic (Chloranthus spicatus (Chulantree)).